The following is a 117-amino-acid chain: Probable prefoldin subunit 1 (117 aa).

Belongs to the prefoldin subunit beta family. Heterohexamer of two PFD-alpha type and four PFD-beta type subunits.

The protein localises to the cytoplasm. Binds specifically to cytosolic chaperonin (c-CPN) and transfers target proteins to it. Binds to nascent polypeptide chain and promotes folding in an environment in which there are many competing pathways for nonnative proteins. Has a role in gonadogenesis. The chain is Probable prefoldin subunit 1 (pfd-1) from Caenorhabditis briggsae.